Reading from the N-terminus, the 487-residue chain is Cytochrome P450 716A75 (487 aa).

A helical transmembrane segment spans residues 5–25; that stretch reads FVSLLSLFLLILLPLSLLFLF. Cys-434 contacts heme.

The protein belongs to the cytochrome P450 family. The cofactor is heme.

The protein localises to the membrane. The enzyme catalyses beta-amyrin + reduced [NADPH--hemoprotein reductase] + O2 = erythrodiol + oxidized [NADPH--hemoprotein reductase] + H2O + H(+). It catalyses the reaction erythrodiol + reduced [NADPH--hemoprotein reductase] + O2 = oleanolic aldehyde + oxidized [NADPH--hemoprotein reductase] + 2 H2O + H(+). It carries out the reaction oleanolic aldehyde + reduced [NADPH--hemoprotein reductase] + O2 = oleanolate + oxidized [NADPH--hemoprotein reductase] + H2O + 2 H(+). Catalyzes the C-28 oxidation of beta-amyrin to form erythrodiol. Catalyzes the C-28 oxidation of erythrodiol to form oleanolic aldehyde. Catalyzes the C-28 oxidation of oleanolic aldehyde to form oleanolate. In Maesa lanceolata (False assegai), this protein is Cytochrome P450 716A75.